The primary structure comprises 491 residues: Cobyric acid synthase (491 aa).

The 190-residue stretch at 250 to 439 (ELNIIVIRLP…LHGIFDNGSW (190 aa)) folds into the GATase cobBQ-type domain. Residue Cys-331 is the Nucleophile of the active site. Residue His-431 is part of the active site.

Belongs to the CobB/CobQ family. CobQ subfamily.

Its pathway is cofactor biosynthesis; adenosylcobalamin biosynthesis. Its function is as follows. Catalyzes amidations at positions B, D, E, and G on adenosylcobyrinic A,C-diamide. NH(2) groups are provided by glutamine, and one molecule of ATP is hydrogenolyzed for each amidation. This is Cobyric acid synthase from Microcystis aeruginosa (strain NIES-843 / IAM M-2473).